A 1490-amino-acid polypeptide reads, in one-letter code: DNA-directed RNA polymerase subunit beta' (1490 aa).

Zn(2+) contacts are provided by C67, C69, C82, and C85. Positions 499, 501, and 503 each coordinate Mg(2+). C868, C944, C951, and C954 together coordinate Zn(2+).

Belongs to the RNA polymerase beta' chain family. As to quaternary structure, the RNAP catalytic core consists of 2 alpha, 1 beta, 1 beta' and 1 omega subunit. When a sigma factor is associated with the core the holoenzyme is formed, which can initiate transcription. Requires Mg(2+) as cofactor. The cofactor is Zn(2+).

It catalyses the reaction RNA(n) + a ribonucleoside 5'-triphosphate = RNA(n+1) + diphosphate. Functionally, DNA-dependent RNA polymerase catalyzes the transcription of DNA into RNA using the four ribonucleoside triphosphates as substrates. In Chlorobaculum tepidum (strain ATCC 49652 / DSM 12025 / NBRC 103806 / TLS) (Chlorobium tepidum), this protein is DNA-directed RNA polymerase subunit beta'.